We begin with the raw amino-acid sequence, 435 residues long: 5-methylthioadenosine/S-adenosylhomocysteine deaminase (435 aa).

Residues histidine 65 and histidine 67 each coordinate Zn(2+). Residues glutamate 94, arginine 150, and histidine 189 each coordinate substrate. Histidine 216 contacts Zn(2+). Substrate-binding residues include glutamate 219 and aspartate 304. Residue aspartate 304 coordinates Zn(2+).

It belongs to the metallo-dependent hydrolases superfamily. MTA/SAH deaminase family. The cofactor is Zn(2+).

It carries out the reaction S-adenosyl-L-homocysteine + H2O + H(+) = S-inosyl-L-homocysteine + NH4(+). The catalysed reaction is S-methyl-5'-thioadenosine + H2O + H(+) = S-methyl-5'-thioinosine + NH4(+). In terms of biological role, catalyzes the deamination of 5-methylthioadenosine and S-adenosyl-L-homocysteine into 5-methylthioinosine and S-inosyl-L-homocysteine, respectively. Is also able to deaminate adenosine. The sequence is that of 5-methylthioadenosine/S-adenosylhomocysteine deaminase from Bacillus cytotoxicus (strain DSM 22905 / CIP 110041 / 391-98 / NVH 391-98).